The sequence spans 201 residues: Urease accessory protein UreG (201 aa).

Glycine 12 to threonine 19 contributes to the GTP binding site.

Belongs to the SIMIBI class G3E GTPase family. UreG subfamily. Homodimer. UreD, UreF and UreG form a complex that acts as a GTP-hydrolysis-dependent molecular chaperone, activating the urease apoprotein by helping to assemble the nickel containing metallocenter of UreC. The UreE protein probably delivers the nickel.

Its subcellular location is the cytoplasm. Facilitates the functional incorporation of the urease nickel metallocenter. This process requires GTP hydrolysis, probably effectuated by UreG. The chain is Urease accessory protein UreG from Dechloromonas aromatica (strain RCB).